The sequence spans 436 residues: Serine protease inhibitor A6 (436 aa).

Residues 1 to 16 form the signal peptide; that stretch reads MHLLVYLSLFFALALA. The interval 26–60 is disordered; the sequence is KHRHRHEQQGHHDSAKHGHQKDKQQQEQIKNDEGK. Basic and acidic residues predominate over residues 32-60; that stretch reads EQQGHHDSAKHGHQKDKQQQEQIKNDEGK. N-linked (GlcNAc...) asparagine glycans are attached at residues N260 and N289.

It belongs to the serpin family. In terms of tissue distribution, liver.

It is found in the secreted. The protein resides in the extracellular space. Functionally, not yet known. This is Serine protease inhibitor A6 (serpina6) from Xenopus laevis (African clawed frog).